We begin with the raw amino-acid sequence, 284 residues long: Protoheme IX farnesyltransferase (284 aa).

9 consecutive transmembrane segments (helical) span residues serine 2 to valine 19, isoleucine 23 to serine 45, glycine 69 to alanine 89, leucine 92 to tryptophan 112, isoleucine 121 to glycine 141, leucine 148 to phenylalanine 168, valine 194 to glycine 214, leucine 217 to tryptophan 237, and leucine 263 to glycine 283.

Belongs to the UbiA prenyltransferase family. Protoheme IX farnesyltransferase subfamily. Interacts with CtaA.

The protein resides in the cell inner membrane. The catalysed reaction is heme b + (2E,6E)-farnesyl diphosphate + H2O = Fe(II)-heme o + diphosphate. It participates in porphyrin-containing compound metabolism; heme O biosynthesis; heme O from protoheme: step 1/1. Converts heme B (protoheme IX) to heme O by substitution of the vinyl group on carbon 2 of heme B porphyrin ring with a hydroxyethyl farnesyl side group. This is Protoheme IX farnesyltransferase from Cereibacter sphaeroides (Rhodobacter sphaeroides).